Here is a 351-residue protein sequence, read N- to C-terminus: Anthranilate phosphoribosyltransferase (351 aa).

Residues Gly80, 83–84 (GD), Thr88, 90–93 (NIST), 108–116 (KHGNRSITS), and Ser120 each bind 5-phospho-alpha-D-ribose 1-diphosphate. Anthranilate is bound at residue Gly80. Ser92 serves as a coordination point for Mg(2+). Asn111 provides a ligand contact to anthranilate. Residue Arg166 participates in anthranilate binding. Residues Asp229 and Glu230 each coordinate Mg(2+).

This sequence belongs to the anthranilate phosphoribosyltransferase family. Homodimer. Mg(2+) serves as cofactor.

The enzyme catalyses N-(5-phospho-beta-D-ribosyl)anthranilate + diphosphate = 5-phospho-alpha-D-ribose 1-diphosphate + anthranilate. It functions in the pathway amino-acid biosynthesis; L-tryptophan biosynthesis; L-tryptophan from chorismate: step 2/5. Catalyzes the transfer of the phosphoribosyl group of 5-phosphorylribose-1-pyrophosphate (PRPP) to anthranilate to yield N-(5'-phosphoribosyl)-anthranilate (PRA). The protein is Anthranilate phosphoribosyltransferase of Chlorobaculum tepidum (strain ATCC 49652 / DSM 12025 / NBRC 103806 / TLS) (Chlorobium tepidum).